The following is a 94-amino-acid chain: Large ribosomal subunit protein bL25 (94 aa).

The protein belongs to the bacterial ribosomal protein bL25 family. As to quaternary structure, part of the 50S ribosomal subunit; part of the 5S rRNA/L5/L18/L25 subcomplex. Contacts the 5S rRNA. Binds to the 5S rRNA independently of L5 and L18.

In terms of biological role, this is one of the proteins that binds to the 5S RNA in the ribosome where it forms part of the central protuberance. The polypeptide is Large ribosomal subunit protein bL25 (Erwinia tasmaniensis (strain DSM 17950 / CFBP 7177 / CIP 109463 / NCPPB 4357 / Et1/99)).